Consider the following 196-residue polypeptide: Hibernation-associated plasma protein HP-20 (196 aa).

An N-terminal signal peptide occupies residues 1–23; the sequence is MTDVWRLAIFVLMVNVLNDQVSC. The region spanning 25–63 is the Collagen-like domain; that stretch reads GPPGPVGYPGVPGVPGPRGPPGQPGAAGRPGDPGPKGPS. The span at 28 to 47 shows a compositional bias: pro residues; sequence GPVGYPGVPGVPGPRGPPGQ. Residues 28–64 are disordered; the sequence is GPVGYPGVPGVPGPRGPPGQPGAAGRPGDPGPKGPSV. One can recognise a C1q domain in the interval 67–196; the sequence is PCRERSAFTV…IYFSGFLISS (130 aa).

In terms of tissue distribution, plasma; synthesized in the liver.

It localises to the secreted. In terms of biological role, plasma proteins HP-20, HP-25, HP-27 and HP-55 form a 140 kDa complex via disulfide bonds in the plasma and are hibernation specific. The sequence is that of Hibernation-associated plasma protein HP-20 from Tamias sibiricus (Siberian chipmunk).